The following is a 253-amino-acid chain: MKLPWLSPDTPFPPVEHALSDPAGLLAAGADLSLERLTAAYSNGIFPWYSEGEPILWWSPDPRMVLACADFAPSHSLRKLLRQIAREESALLPRVQVRVDTEFDAVVAQCAAPRDGQAGTWITADMQQAYRAWHAAGVAHSVETWIDGELAGGLYGISLGRMFFGESMFTRVPDASKVALAYLVAFLRRAGVEWIDCQQQTRHLASLGARPVPRARFVEHIRQAIAGPAPAWQSGRLDSQGSLHPAPVSTLLY.

Belongs to the L/F-transferase family.

It localises to the cytoplasm. It carries out the reaction N-terminal L-lysyl-[protein] + L-leucyl-tRNA(Leu) = N-terminal L-leucyl-L-lysyl-[protein] + tRNA(Leu) + H(+). It catalyses the reaction N-terminal L-arginyl-[protein] + L-leucyl-tRNA(Leu) = N-terminal L-leucyl-L-arginyl-[protein] + tRNA(Leu) + H(+). The catalysed reaction is L-phenylalanyl-tRNA(Phe) + an N-terminal L-alpha-aminoacyl-[protein] = an N-terminal L-phenylalanyl-L-alpha-aminoacyl-[protein] + tRNA(Phe). In terms of biological role, functions in the N-end rule pathway of protein degradation where it conjugates Leu, Phe and, less efficiently, Met from aminoacyl-tRNAs to the N-termini of proteins containing an N-terminal arginine or lysine. This Bordetella petrii (strain ATCC BAA-461 / DSM 12804 / CCUG 43448) protein is Leucyl/phenylalanyl-tRNA--protein transferase.